Here is a 172-residue protein sequence, read N- to C-terminus: Putative metal-dependent hydrolase OB0782 (172 aa).

His-64, His-155, and His-159 together coordinate Zn(2+).

This sequence belongs to the metal hydrolase YfiT family. Homodimer. It depends on Zn(2+) as a cofactor.

The protein localises to the cytoplasm. Possible metal-dependent hydrolase. The protein is Putative metal-dependent hydrolase OB0782 of Oceanobacillus iheyensis (strain DSM 14371 / CIP 107618 / JCM 11309 / KCTC 3954 / HTE831).